The chain runs to 37 residues: Cytochrome b6-f complex subunit 5 (37 aa).

Residues 5–25 (ILLGIVLGMVLVTLAGLFVAA) form a helical membrane-spanning segment.

This sequence belongs to the PetG family. In terms of assembly, the 4 large subunits of the cytochrome b6-f complex are cytochrome b6, subunit IV (17 kDa polypeptide, PetD), cytochrome f and the Rieske protein, while the 4 small subunits are PetG, PetL, PetM and PetN. The complex functions as a dimer.

It localises to the cellular thylakoid membrane. Component of the cytochrome b6-f complex, which mediates electron transfer between photosystem II (PSII) and photosystem I (PSI), cyclic electron flow around PSI, and state transitions. PetG is required for either the stability or assembly of the cytochrome b6-f complex. This chain is Cytochrome b6-f complex subunit 5, found in Synechococcus sp. (strain JA-3-3Ab) (Cyanobacteria bacterium Yellowstone A-Prime).